Reading from the N-terminus, the 154-residue chain is Transcriptional repressor NrdR (154 aa).

Residues 3–34 (CPFCNAPDTKVIDSRLATEGAQVRRRRECMSC) fold into a zinc finger. An ATP-cone domain is found at 49 to 139 (PRVIKSDGNR…VYRSFQDVNA (91 aa)).

This sequence belongs to the NrdR family. Zn(2+) is required as a cofactor.

Negatively regulates transcription of bacterial ribonucleotide reductase nrd genes and operons by binding to NrdR-boxes. This is Transcriptional repressor NrdR from Hydrogenovibrio crunogenus (strain DSM 25203 / XCL-2) (Thiomicrospira crunogena).